A 157-amino-acid polypeptide reads, in one-letter code: Glutaredoxin-2, mitochondrial (157 aa).

A mitochondrion-targeting transit peptide spans 1 to 19; the sequence is MSWYRAASVGRRLVASGRI. Residues 50-150 form the Glutaredoxin domain; the sequence is VNQIQETISN…PLVHQCYLNK (101 aa). Position 61 (cysteine 61) interacts with [2Fe-2S] cluster. A glutathione-binding site is contributed by lysine 67. An S-glutathionyl cysteine; alternate modification is found at cysteine 70. Cysteine 70 and cysteine 73 are oxidised to a cystine. Positions 102 and 114 each coordinate glutathione. Residue cysteine 146 coordinates [2Fe-2S] cluster.

Belongs to the glutaredoxin family. Monomer; active form. Homodimer; inactive form. The homodimer is probably linked by 1 2Fe-2S cluster.

The protein resides in the mitochondrion. The protein localises to the nucleus. Its activity is regulated as follows. The 2Fe-2S present in the homodimer leads to inactivation of the enzyme. The 2Fe-2S may serve as a redox sensor: the presence of one-electron oxidants or reductants leading to the loss of the 2Fe-2S cluster, subsequent monomerization and activation of the enzyme. In terms of biological role, glutathione-dependent oxidoreductase that facilitates the maintenance of mitochondrial redox homeostasis upon induction of apoptosis by oxidative stress. Involved in response to hydrogen peroxide and regulation of apoptosis caused by oxidative stress. Acts as a very efficient catalyst of monothiol reactions because of its high affinity for protein glutathione-mixed disulfides. Can receive electrons not only from glutathione (GSH), but also from thioredoxin reductase supporting both monothiol and dithiol reactions. Efficiently catalyzes both glutathionylation and deglutathionylation of mitochondrial complex I, which in turn regulates the superoxide production by the complex. Overexpression decreases the susceptibility to apoptosis and prevents loss of cardiolipin and cytochrome c release. In Rattus norvegicus (Rat), this protein is Glutaredoxin-2, mitochondrial (Glrx2).